The primary structure comprises 219 residues: VQ motif-containing protein 19 (219 aa).

The short motif at 47 to 56 (FKQVVQMLTG) is the VQ element. The segment at 52 to 94 (QMLTGSSSPRSPDSPRPPTTPSGKGNFVIPPIKTAQPKKHSGN) is disordered. Phosphoserine occurs at positions 59, 65, 127, 131, 139, 141, and 152. The residue at position 155 (T155) is a Phosphothreonine. 2 disordered regions span residues 156–177 (PLKQ…PLSE) and 190–219 (HRSP…SPEM). A phosphoserine mark is found at S192 and S195. A phosphothreonine mark is found at T196 and T211. A phosphoserine mark is found at S212 and S216.

In terms of processing, phosphorylated on serine and threonine residues by MPK6.

It is found in the nucleus. In terms of biological role, may modulate WRKY transcription factor activities. This is VQ motif-containing protein 19 from Arabidopsis thaliana (Mouse-ear cress).